The sequence spans 399 residues: Glutathione S-transferase LANCL1 (399 aa).

The residue at position 2 (Ala-2) is an N-acetylalanine. Residue Lys-142 is modified to N6-acetyllysine. Residue Cys-276 participates in Zn(2+) binding. Residue Lys-317 participates in glutathione binding. 2 residues coordinate Zn(2+): Cys-322 and His-323. A glutathione-binding site is contributed by 364 to 367 (RTPD).

This sequence belongs to the LanC-like protein family. Interacts with the C-terminal of STOM. Interacts with the EPS8 SH3 domain. Interaction with EPS8 is inhibited by glutathione binding. As to expression, expressed in brain.

It localises to the cytoplasm. Its subcellular location is the cell membrane. It catalyses the reaction RX + glutathione = an S-substituted glutathione + a halide anion + H(+). It carries out the reaction 1-chloro-2,4-dinitrobenzene + glutathione = 2,4-dinitrophenyl-S-glutathione + chloride + H(+). Functions as a glutathione transferase. Catalyzes conjugation of the glutathione (GSH) to artificial substrates 1-chloro-2,4-dinitrobenzene (CDNB) and p-nitrophenyl acetate. Mitigates neuronal oxidative stress during normal postnatal development and in response to oxidative stresses probably through GSH antioxidant defense mechanism. May play a role in EPS8 signaling. Binds glutathione. This Bos taurus (Bovine) protein is Glutathione S-transferase LANCL1 (LANCL1).